Consider the following 311-residue polypeptide: Transcription factor BIM2 (311 aa).

Disordered stretches follow at residues 1–60 (MRTG…RRSK) and 271–311 (ANQG…MKTL). 2 stretches are compositionally biased toward basic and acidic residues: residues 33–44 (SNRDSKENDKAS) and 51–60 (SVTEQRRRSK). Residues 45–95 (AIRSKHSVTEQRRRSKINERFQILRELIPNSEQKRDTASFLLEVIDYVQYL) form the bHLH domain.

Homodimer. Interacts with the N-terminus of BZR2/BES1. Expressed constitutively in roots, leaves, stems, and flowers.

It is found in the nucleus. In terms of biological role, positive brassinosteroid-signaling protein. This is Transcription factor BIM2 (BIM2) from Arabidopsis thaliana (Mouse-ear cress).